Consider the following 561-residue polypeptide: Dihydroxy-acid dehydratase (561 aa).

Cysteine 50 contacts [2Fe-2S] cluster. Aspartate 82 contributes to the Mg(2+) binding site. A [2Fe-2S] cluster-binding site is contributed by cysteine 123. Aspartate 124 and lysine 125 together coordinate Mg(2+). Lysine 125 is modified (N6-carboxylysine). A [2Fe-2S] cluster-binding site is contributed by cysteine 195. Position 447 (glutamate 447) interacts with Mg(2+). Serine 473 (proton acceptor) is an active-site residue.

The protein belongs to the IlvD/Edd family. Homodimer. Requires [2Fe-2S] cluster as cofactor. The cofactor is Mg(2+).

It carries out the reaction (2R)-2,3-dihydroxy-3-methylbutanoate = 3-methyl-2-oxobutanoate + H2O. It catalyses the reaction (2R,3R)-2,3-dihydroxy-3-methylpentanoate = (S)-3-methyl-2-oxopentanoate + H2O. It participates in amino-acid biosynthesis; L-isoleucine biosynthesis; L-isoleucine from 2-oxobutanoate: step 3/4. It functions in the pathway amino-acid biosynthesis; L-valine biosynthesis; L-valine from pyruvate: step 3/4. Functions in the biosynthesis of branched-chain amino acids. Catalyzes the dehydration of (2R,3R)-2,3-dihydroxy-3-methylpentanoate (2,3-dihydroxy-3-methylvalerate) into 2-oxo-3-methylpentanoate (2-oxo-3-methylvalerate) and of (2R)-2,3-dihydroxy-3-methylbutanoate (2,3-dihydroxyisovalerate) into 2-oxo-3-methylbutanoate (2-oxoisovalerate), the penultimate precursor to L-isoleucine and L-valine, respectively. This is Dihydroxy-acid dehydratase from Trichodesmium erythraeum (strain IMS101).